The following is a 298-amino-acid chain: Thymidylate synthase (298 aa).

Residues arginine 25 and 159–160 each bind dUMP; that span reads RR. Cysteine 179 acts as the Nucleophile in catalysis. Residues 200–203, asparagine 211, and 241–243 contribute to the dUMP site; these read RSCD and HLY. Aspartate 203 contacts (6R)-5,10-methylene-5,6,7,8-tetrahydrofolate. Alanine 297 lines the (6R)-5,10-methylene-5,6,7,8-tetrahydrofolate pocket.

This sequence belongs to the thymidylate synthase family. Bacterial-type ThyA subfamily. Homodimer.

It is found in the cytoplasm. The catalysed reaction is dUMP + (6R)-5,10-methylene-5,6,7,8-tetrahydrofolate = 7,8-dihydrofolate + dTMP. The protein operates within pyrimidine metabolism; dTTP biosynthesis. Its function is as follows. Catalyzes the reductive methylation of 2'-deoxyuridine-5'-monophosphate (dUMP) to 2'-deoxythymidine-5'-monophosphate (dTMP) while utilizing 5,10-methylenetetrahydrofolate (mTHF) as the methyl donor and reductant in the reaction, yielding dihydrofolate (DHF) as a by-product. This enzymatic reaction provides an intracellular de novo source of dTMP, an essential precursor for DNA biosynthesis. This is Thymidylate synthase from Rhodopseudomonas palustris (strain BisA53).